The primary structure comprises 293 residues: tRNA pseudouridine synthase A (293 aa).

Residue Asp60 is the Nucleophile of the active site. Substrate is bound at residue Tyr118.

It belongs to the tRNA pseudouridine synthase TruA family. As to quaternary structure, homodimer.

The enzyme catalyses uridine(38/39/40) in tRNA = pseudouridine(38/39/40) in tRNA. Its function is as follows. Formation of pseudouridine at positions 38, 39 and 40 in the anticodon stem and loop of transfer RNAs. This is tRNA pseudouridine synthase A from Rippkaea orientalis (strain PCC 8801 / RF-1) (Cyanothece sp. (strain PCC 8801)).